We begin with the raw amino-acid sequence, 159 residues long: MSRRAPGSRLSSGGTNYSRSWNDWQPRTDSASADPGNLKYSSSRDRGGSSSYGLQPSNSAVVSRQRHDDTRVHADIQNDEKGGYSVNGGSGENTYGRKSLGQELRVNNVTSPEFTSVQHGSRALATKDMRKSQERSMSYCDESRLSNLLRRITREDDRD.

The disordered stretch occupies residues 1–139 (MSRRAPGSRL…RKSQERSMSY (139 aa)). The span at 9 to 31 (RLSSGGTNYSRSWNDWQPRTDSA) shows a compositional bias: polar residues. A compositionally biased stretch (basic and acidic residues) spans 65–82 (QRHDDTRVHADIQNDEKG). Positions 105–119 (RVNNVTSPEFTSVQH) are enriched in polar residues. The segment covering 125–134 (ATKDMRKSQE) has biased composition (basic and acidic residues).

This is an uncharacterized protein from Homo sapiens (Human).